Here is a 776-residue protein sequence, read N- to C-terminus: MVHLSPLLRPLAAFSFFTSLASTESIFPDCSTGPLSKNNVCDTSLDPVSRAKSLVAAMTLEEKINNTKYDSSGAPRLGLPAYNWWNEALHGVAEGHGVSFSDSGNFSYATSFPMPILLGAAFDDDLVKQVATVISTEARAFANGGHAGLDYWTPNINPFRDPRWGRGQETPGEDPLHLSRYVYHLVDGLQDGIGPERPKVVATCKHFAAYDLENWEGIERYAFDAVVSPQDLSEYYLPSFKTCTRDAKVDAVMCSYNSLNGIPTCADRWLLQTLLREHWGWEQTGHWVTGDCGAIDNIYADHHYVADGAHAAAAALNAGTDLDCGSVFPEYLRSALQQGLYNNQTLNNALIRLYSSLVKLGYFDPADDQPYRSIGWNEVFTPAAEELAHKATVEGIVMLKNDGTLPLKSNGTVAIIGPFANATTQLQGNYEGPPKYIRTLIWAAVHNGYKVKFSQGTDINSNSSAGFAEAISAAKEADTVIYAGGIDNTIEKESQDRTTIVWPGNQLDLIEQLSDLEKPLIVVQFGGGQVDDSSLLANAGVGALLWAGYPSQAGGAAVFDILTGKSAPAGRLPVTQYPASYVDEVPMTDMTLRPGSNNPGRTYRWYDKAVLPFGFGLHYTTFNVSWNHAEYGPYNTDSVASGTTNAPVDTELFDTFSITVTNTGNVASDYIALLFLTADRVGPEPYPIKTLVGYSRAKGIEPGQSQQVKLDVSVGSVARTAENGDLVLYPGSYKLEVDVGQDFPTATFTVSGKEKVLDEFPEPQQNATSAVTRWGR.

Positions 1–23 are cleaved as a signal peptide; it reads MVHLSPLLRPLAAFSFFTSLAST. Residues Asn-65 and Asn-105 are each glycosylated (N-linked (GlcNAc...) asparagine). Residue Asp-291 is part of the active site. N-linked (GlcNAc...) asparagine glycans are attached at residues Asn-343, Asn-410, Asn-421, Asn-462, Asn-623, and Asn-766.

The protein belongs to the glycosyl hydrolase 3 family.

It is found in the secreted. The enzyme catalyses Hydrolysis of (1-&gt;4)-beta-D-xylans, to remove successive D-xylose residues from the non-reducing termini.. It participates in glycan degradation; xylan degradation. Xylan 1,4-beta-xylosidase involved in the hydrolysis of xylan, a major structural heterogeneous polysaccharide found in plant biomass representing the second most abundant polysaccharide in the biosphere, after cellulose. The polypeptide is Probable exo-1,4-beta-xylosidase bxlB (bxlB) (Aspergillus flavus (strain ATCC 200026 / FGSC A1120 / IAM 13836 / NRRL 3357 / JCM 12722 / SRRC 167)).